The following is a 209-amino-acid chain: Small ribosomal subunit protein uS4 (209 aa).

Zn(2+) is bound by residues Cys9, Cys12, Cys26, and Cys31. The segment at 9–31 (CKLCRREGMKLYLKGERCYTDKC) adopts a C4-type zinc-finger fold. In terms of domain architecture, S4 RNA-binding spans 98-161 (ARLDNVVYRM…RDLEVIKKAI (64 aa)).

It belongs to the universal ribosomal protein uS4 family. In terms of assembly, part of the 30S ribosomal subunit. Contacts protein S5. The interaction surface between S4 and S5 is involved in control of translational fidelity. Requires Zn(2+) as cofactor.

One of the primary rRNA binding proteins, it binds directly to 16S rRNA where it nucleates assembly of the body of the 30S subunit. In terms of biological role, with S5 and S12 plays an important role in translational accuracy. The sequence is that of Small ribosomal subunit protein uS4 (rpsD) from Thermotoga maritima (strain ATCC 43589 / DSM 3109 / JCM 10099 / NBRC 100826 / MSB8).